Here is an 825-residue protein sequence, read N- to C-terminus: Breast cancer anti-estrogen resistance protein 3 homolog (825 aa).

Alanine 2 bears the N-acetylalanine mark. The disordered stretch occupies residues 31 to 93; it reads KSPLTEHRPD…PVTQDSIQES (63 aa). Residues serine 32, serine 78, serine 83, serine 182, and serine 290 each carry the phosphoserine modification. A compositionally biased stretch (polar residues) spans 75 to 93; that stretch reads HSKSPQQNSPVTQDSIQES. The 100-residue stretch at 154 to 253 folds into the SH2 domain; sequence WYHGRIPRQV…QSGAIIFQPI (100 aa). Lysine 334 bears the N6-methyllysine mark. Phosphoserine occurs at positions 358, 363, and 375. Arginine 442 bears the Omega-N-methylarginine mark. Serine 471 bears the Phosphoserine mark. The region spanning 548-818 is the Ras-GEF domain; the sequence is DPKVIAQHIL…TALSRKLEPP (271 aa). Residues 744-748 are mediates the interaction with BCAR1/p130CAS; it reads LATAR.

Part of a complex comprised of PTPRA, BCAR1, BCAR3 (via SH2 domain) and SRC; the formation of the complex is dependent on integrin mediated-tyrosine phosphorylation of PTPRA. Within the complex, interacts (via SH2 domain) with PTPRA (when phosphorylated on 'Tyr-798'). Interacts (via Ras-GEF domain) with BCAR1. Interacts (via Ras-GEF domain) with NEDD9. Interacts with PTK2/FAK1. Interacts with PTPN1. Interacts (via SH2 domain) with EGFR (when tyrosine-phosphorylated). In terms of processing, phosphorylated on tyrosine residues.

The protein resides in the cytoplasm. It localises to the cell junction. Its subcellular location is the focal adhesion. Acts as an adapter protein downstream of several growth factor receptors to promote cell proliferation, migration, and redistribution of actin fibers. Specifically involved in INS/insulin signaling pathway by mediating MAPK1/ERK2-MAPK3/ERK1 activation and DNA synthesis. Promotes insulin-mediated membrane ruffling. In response to vasoconstrictor peptide EDN1, involved in the activation of RAP1 downstream of PTK2B via interaction with phosphorylated BCAR1. Inhibits cell migration and invasion via regulation of TGFB-mediated matrix digestion, actin filament rearrangement, and inhibition of invadopodia activity. May inhibit TGFB-SMAD signaling, via facilitating BCAR1 and SMAD2 and/or SMAD3 interaction. Regulates EGF-induced DNA synthesis. Required for the maintenance of ocular lens morphology and structural integrity, potentially via regulation of focal adhesion complex signaling. Acts upstream of PTPRA to regulate the localization of BCAR1 and PTPRA to focal adhesions, via regulation of SRC-mediated phosphorylation of PTPRA. Positively regulates integrin-induced tyrosine phosphorylation of BCAR1. Acts as a guanine nucleotide exchange factor (GEF) for small GTPases RALA, RAP1A and RRAS. However, in a contrasting study, lacks GEF activity towards RAP1. The polypeptide is Breast cancer anti-estrogen resistance protein 3 homolog (BCAR3) (Macaca fascicularis (Crab-eating macaque)).